Consider the following 631-residue polypeptide: 1-deoxy-D-xylulose-5-phosphate synthase (631 aa).

Residues His-73 and 114–116 contribute to the thiamine diphosphate site; that span reads GHS. Asp-145 contributes to the Mg(2+) binding site. Residues 146–147, Asn-174, Tyr-285, and Glu-366 contribute to the thiamine diphosphate site; that span reads GA. Asn-174 is a Mg(2+) binding site.

Belongs to the transketolase family. DXPS subfamily. Homodimer. Mg(2+) serves as cofactor. Thiamine diphosphate is required as a cofactor.

It catalyses the reaction D-glyceraldehyde 3-phosphate + pyruvate + H(+) = 1-deoxy-D-xylulose 5-phosphate + CO2. Its pathway is metabolic intermediate biosynthesis; 1-deoxy-D-xylulose 5-phosphate biosynthesis; 1-deoxy-D-xylulose 5-phosphate from D-glyceraldehyde 3-phosphate and pyruvate: step 1/1. In terms of biological role, catalyzes the acyloin condensation reaction between C atoms 2 and 3 of pyruvate and glyceraldehyde 3-phosphate to yield 1-deoxy-D-xylulose-5-phosphate (DXP). This is 1-deoxy-D-xylulose-5-phosphate synthase from Desulfitobacterium hafniense (strain Y51).